The chain runs to 67 residues: Large ribosomal subunit protein bL35 (67 aa).

The interval 1-41 (MPKMKTHRGAAKRFKKTGTGKLKRSHAYTSHMFRHKSQKQK) is disordered.

The protein belongs to the bacterial ribosomal protein bL35 family.

The protein is Large ribosomal subunit protein bL35 of Shouchella clausii (strain KSM-K16) (Alkalihalobacillus clausii).